Consider the following 69-residue polypeptide: Large ribosomal subunit protein bL31 (69 aa).

Zn(2+)-binding residues include cysteine 17, cysteine 19, cysteine 37, and cysteine 40.

It belongs to the bacterial ribosomal protein bL31 family. Type A subfamily. In terms of assembly, part of the 50S ribosomal subunit. Zn(2+) serves as cofactor.

Binds the 23S rRNA. The protein is Large ribosomal subunit protein bL31 of Caldicellulosiruptor bescii (strain ATCC BAA-1888 / DSM 6725 / KCTC 15123 / Z-1320) (Anaerocellum thermophilum).